The primary structure comprises 880 residues: 3-isopropylmalate dehydratase large subunit gloJ (880 aa).

3 residues coordinate [4Fe-4S] cluster: cysteine 457, cysteine 520, and cysteine 523.

The protein belongs to the aconitase/IPM isomerase family. LeuC type 2 subfamily. It depends on [4Fe-4S] cluster as a cofactor.

The catalysed reaction is (2R,3S)-3-isopropylmalate = (2S)-2-isopropylmalate. The protein operates within mycotoxin biosynthesis. 3-isopropylmalate dehydratase large subunit; part of the gene cluster that mediates the biosynthesis of pneumocandins, lipohexapeptides of the echinocandin family that prevent fungal cell wall formation by non-competitive inhibition of beta-1,3-glucan synthase. The 10,12-dimethylmyristoyl side chain is synthesized by the reducing polyketide synthase gloL/GLPKS4. The thioesterase gloN/GLHYD exclusively interacts with gloL/GLPKS4 to maintain turnover of the polyketide side chain. The 10R,12S-dimethylmyristic acid is then transferred to the first thiolation domain of the nonribosomal peptide synthetase gloA/GLNRPS4 by the acyl-AMP ligase gloD/GLligase, followed by its acylation to L-ornithine to trigger elongation of the cyclic hexapeptide. L-ornithine, 4R-hydroxyl-L-proline (generated from L-proline by the dioxygenase gloF/GLOXY2), 3S-hydroxyl-L-homotyrosine (generated by gloG/GLHtyB, gloH/GLHtyA, gloI/GLHtyC, gloJ/GLHtyD and hydroxylated at C-3 by the dioxygenase gloM/GLOXY1), 3R-hydroxyl-L-glutamine (generated from L-glutamine probably by the dioxygenase gloE/GLOXY3) and 3S-hydroxyl-L-proline (generated from L-proline by the dioxygenase gloF/GLOXY2 to yield pneumocandin B0), or 3S-hydroxyl-4S-methyl-L-proline (generated from L-leucine by the dioxygenase gloC/GLOXY4 to yield pneumocandin A0) are sequentially added to the growing chain. The last C domain of gloA/GLNRPS4 is proposed to be responsible for cyclization by condensation to form the peptide bond between L-ornithine and 3S-hydroxyl-4S-methyl-L-proline (for pneumocandin A0) or 3S-hydroxyl-L-proline (for pneumocandin B0). Finally, the subsequent C-4 hydroxylation of 3S-hydroxyl-L-homotyrosine and L-ornithine dihydroxylation at C-4 and C-5 are performed by the cytochrome P450 monooxygenases gloP/GLP450-1 and gloO/GLP450-2, respectively. The polypeptide is 3-isopropylmalate dehydratase large subunit gloJ (Glarea lozoyensis (strain ATCC 20868 / MF5171)).